The primary structure comprises 86 residues: Acyl carrier protein (86 aa).

One can recognise a Carrier domain in the interval 2–82 (ATVFERVKKV…AVVDYLKSKG (81 aa)). S37 is modified (O-(pantetheine 4'-phosphoryl)serine).

Belongs to the acyl carrier protein (ACP) family. Post-translationally, 4'-phosphopantetheine is transferred from CoA to a specific serine of apo-ACP by AcpS. This modification is essential for activity because fatty acids are bound in thioester linkage to the sulfhydryl of the prosthetic group.

The protein localises to the cytoplasm. It participates in lipid metabolism; fatty acid biosynthesis. Its function is as follows. Carrier of the growing fatty acid chain in fatty acid biosynthesis. This chain is Acyl carrier protein, found in Dehalococcoides mccartyi (strain ATCC BAA-2266 / KCTC 15142 / 195) (Dehalococcoides ethenogenes (strain 195)).